The chain runs to 423 residues: uncharacterized protein (423 aa).

Belongs to the asfivirus E423R family.

Its subcellular location is the virion. This is an uncharacterized protein from Ornithodoros (relapsing fever ticks).